A 107-amino-acid polypeptide reads, in one-letter code: Homeobox protein HD-7 (107 aa).

The homeobox DNA-binding region spans 21 to 80 (KPGEKVRKSEFQKEVLKKVYQATPYPTWENKIDIGILISLSPRAVDIWFQNKRHINKGKN).

It localises to the nucleus. The protein is Homeobox protein HD-7 (HD-7) of Encephalitozoon cuniculi (strain GB-M1) (Microsporidian parasite).